A 350-amino-acid chain; its full sequence is Lipase chaperone (350 aa).

The helical transmembrane segment at 12 to 32 (IVLYLILGCVVVCGVWYSFDV) threads the bilayer.

The protein belongs to the lipase chaperone family.

It is found in the cell inner membrane. Its function is as follows. May be involved in the folding of the extracellular lipase during its passage through the periplasm. The protein is Lipase chaperone (lifO) of Xylella fastidiosa (strain 9a5c).